The sequence spans 240 residues: Probable transcriptional regulatory protein PBPRB1582 (240 aa).

Belongs to the TACO1 family.

Its subcellular location is the cytoplasm. The protein is Probable transcriptional regulatory protein PBPRB1582 of Photobacterium profundum (strain SS9).